The sequence spans 445 residues: Alkylglycerol monooxygenase (445 aa).

The next 2 helical transmembrane spans lie at 43-63 and 111-131; these read ATPF…ILKG and WDSP…YYWF. Residues 120–249 form the Fatty acid hydroxylase domain; it reads AFLGVDFGYY…LIIWDKIFGT (130 aa). The Histidine box-1 motif lies at 132 to 136; that stretch reads HRMAH. Positions 145–149 match the Histidine box-2 motif; it reads HQTHH. The short motif at 221–225 is the Histidine box-3 element; that stretch reads HRVHH. The next 3 membrane-spanning stretches (helical) occupy residues 334–354, 363–383, and 413–433; these read LLKI…EETF, VTLL…GFLL, and VPSL…FWGV.

It belongs to the sterol desaturase family. TMEM195 subfamily. Fe cation is required as a cofactor.

The protein resides in the endoplasmic reticulum membrane. It catalyses the reaction 1-O-(1,2-saturated-alkyl)-sn-glycerol + (6R)-L-erythro-5,6,7,8-tetrahydrobiopterin + O2 = a 1-(1-hydroxyalkyl)-sn-glycerol + (6R)-L-erythro-6,7-dihydrobiopterin + H2O. In terms of biological role, glyceryl-ether monooxygenase that cleaves the O-alkyl bond of ether lipids. Ether lipids are essential components of brain membranes. The protein is Alkylglycerol monooxygenase (AGMO) of Homo sapiens (Human).